The chain runs to 357 residues: Heme A synthase (357 aa).

The next 5 helical transmembrane spans lie at 24-44 (LVRYWLYAVFVVLIAIVMVGG), 110-130 (MLARFVGFLVAVPLAFFWVTG), 140-160 (MLGLLALGGLQGAIGWWMVAS), 175-195 (IHLTTACIIITAVFYIARGLV), and 209-229 (FAGWIVFAVLVQIYLGGLVAG). Position 272 (His-272) interacts with heme. 3 helical membrane-spanning segments follow: residues 274-294 (MFAYTVLVLTVLHSLQVWKQV), 303-323 (TIVLVGLVLIQAVIGIATLLM), and 325-345 (VPLHLGLTHQFFALIVLAFAV). His-333 is a heme binding site.

The protein belongs to the COX15/CtaA family. Type 2 subfamily. As to quaternary structure, interacts with CtaB. It depends on heme b as a cofactor.

It is found in the cell membrane. It carries out the reaction Fe(II)-heme o + 2 A + H2O = Fe(II)-heme a + 2 AH2. The protein operates within porphyrin-containing compound metabolism; heme A biosynthesis; heme A from heme O: step 1/1. Functionally, catalyzes the conversion of heme O to heme A by two successive hydroxylations of the methyl group at C8. The first hydroxylation forms heme I, the second hydroxylation results in an unstable dihydroxymethyl group, which spontaneously dehydrates, resulting in the formyl group of heme A. This Brucella anthropi (strain ATCC 49188 / DSM 6882 / CCUG 24695 / JCM 21032 / LMG 3331 / NBRC 15819 / NCTC 12168 / Alc 37) (Ochrobactrum anthropi) protein is Heme A synthase.